Here is a 190-residue protein sequence, read N- to C-terminus: Somatotropin (190 aa).

H19 serves as a coordination point for Zn(2+). Residues C52 and C163 are joined by a disulfide bond. S105 carries the phosphoserine modification. E172 contacts Zn(2+). C180 and C188 are disulfide-bonded.

The protein belongs to the somatotropin/prolactin family.

Its subcellular location is the secreted. Plays an important role in growth control. Its major role in stimulating body growth is to stimulate the liver and other tissues to secrete IGF1. It stimulates both the differentiation and proliferation of myoblasts. It also stimulates amino acid uptake and protein synthesis in muscle and other tissues. This Vulpes vulpes (Red fox) protein is Somatotropin (GH1).